The chain runs to 527 residues: DNA polymerase epsilon subunit 2 (527 aa).

Belongs to the DNA polymerase epsilon subunit B family. Component of the DNA polymerase epsilon complex consisting of four subunits: the catalytic subunit POLE and the accessory subunits POLE2, POLE3 and POLE4.

Its subcellular location is the nucleus. Its function is as follows. Accessory component of the DNA polymerase epsilon complex. Participates in DNA repair and in chromosomal DNA replication. In Mus musculus (Mouse), this protein is DNA polymerase epsilon subunit 2 (Pole2).